A 359-amino-acid chain; its full sequence is MSVLTVNLGENSYDILIDGGTLPSLGRHCLERGLSGRVAVISNPAVAELYAEQVRASLVESGNQVTLILIPEGEEHKNAATLNLVYDQLIQAGLDRNSYIVALGGGVVGDLAGFAAATFLRGIPFVQVPTTLLAQVDSSVGGKTAIDHPRGKNLIGAFYQPRLVLIDVETLTTLPQREFRAGLAEVIKYGVAMDLAFYELLERDSGRILEMDADCLERIVLRCCELKARVVEQDEKESGLRAILNYGHTLGHAIETLAGYGTLVHGEAVAIGMVLAARISLAGGYCSEGDVSRIVALLGRFGLPCIPPRIDQGRLAETLLTDKKSRSGIIRFICNRGIGDCVVVNLTAEQLLTLSGLEV.

Residues 72-77, 106-110, 130-131, K143, K152, and 170-173 each bind NAD(+); these read EGEEHK, GVVGD, TT, and TLTT. Zn(2+)-binding residues include E185, H248, and H265.

The protein belongs to the sugar phosphate cyclases superfamily. Dehydroquinate synthase family. The cofactor is Co(2+). It depends on Zn(2+) as a cofactor. Requires NAD(+) as cofactor.

The protein resides in the cytoplasm. The catalysed reaction is 7-phospho-2-dehydro-3-deoxy-D-arabino-heptonate = 3-dehydroquinate + phosphate. It participates in metabolic intermediate biosynthesis; chorismate biosynthesis; chorismate from D-erythrose 4-phosphate and phosphoenolpyruvate: step 2/7. Its function is as follows. Catalyzes the conversion of 3-deoxy-D-arabino-heptulosonate 7-phosphate (DAHP) to dehydroquinate (DHQ). The chain is 3-dehydroquinate synthase from Pelobacter propionicus (strain DSM 2379 / NBRC 103807 / OttBd1).